The primary structure comprises 334 residues: D-fructose 1,6-bisphosphatase class 2/sedoheptulose 1,7-bisphosphatase (334 aa).

The Mn(2+) site is built by Asp33, Glu57, Asp85, and Glu88. Residues 88–90, Tyr119, 164–166, and 186–188 each bind substrate; these read EGT, RAR, and DGD. Glu213 serves as a coordination point for Mn(2+).

It belongs to the FBPase class 2 family. As to quaternary structure, homotetramer. It depends on Mn(2+) as a cofactor.

The catalysed reaction is beta-D-fructose 1,6-bisphosphate + H2O = beta-D-fructose 6-phosphate + phosphate. The enzyme catalyses D-sedoheptulose 1,7-bisphosphate + H2O = D-sedoheptulose 7-phosphate + phosphate. The protein operates within carbohydrate biosynthesis; Calvin cycle. Its function is as follows. Catalyzes the hydrolysis of fructose 1,6-bisphosphate (Fru 1,6-P2) and sedoheptulose 1,7-bisphosphate (Sed 1,7-P2) to fructose 6-phosphate and sedoheptulose 7-phosphate, respectively. In Synechococcus sp. (strain RCC307), this protein is D-fructose 1,6-bisphosphatase class 2/sedoheptulose 1,7-bisphosphatase.